Consider the following 1464-residue polypeptide: DNA polymerase III PolC-type (1464 aa).

Positions 426-582 constitute an Exonuclease domain; it reads YVVFDVETTG…YDAEATGRLL (157 aa).

Belongs to the DNA polymerase type-C family. PolC subfamily.

It is found in the cytoplasm. The enzyme catalyses DNA(n) + a 2'-deoxyribonucleoside 5'-triphosphate = DNA(n+1) + diphosphate. Required for replicative DNA synthesis. This DNA polymerase also exhibits 3' to 5' exonuclease activity. The chain is DNA polymerase III PolC-type from Streptococcus thermophilus (strain ATCC BAA-491 / LMD-9).